Consider the following 300-residue polypeptide: MTQEGQLEKRFLDYLHSERNYSEHTSTAYENDLSDFRRFLNEQAIIEYQQVTFLDVRIYLTELKQKSFSRTTVARKISSLRSFYTFLLRENVITENPFTYVSHAKNQLRLPKFFYSEEMEALFQVVYEDNETLTLRDRVILEVLYGTGIRVSECAGIMLSDLDTSYQAILIRGKGNKERYVPFGAYAEDAITDYLSGRIELMTRFKKTHDSLLINHYGDPLTTRGIRYCLTKIISKASLTRKIHPHMLRHTFATDLLNNGADMRTVQELLGHASLSSTQIYTHVTKEHLKSTYMKHHPRA.

Residues 2–88 enclose the Core-binding (CB) domain; it reads TQEGQLEKRF…SLRSFYTFLL (87 aa). One can recognise a Tyr recombinase domain in the interval 109 to 294; that stretch reads RLPKFFYSEE…TKEHLKSTYM (186 aa). Catalysis depends on residues arginine 150, lysine 174, histidine 246, arginine 249, and histidine 272. Tyrosine 281 (O-(3'-phospho-DNA)-tyrosine intermediate) is an active-site residue.

The protein belongs to the 'phage' integrase family. XerC subfamily. In terms of assembly, forms a cyclic heterotetrameric complex composed of two molecules of XerC and two molecules of XerD.

It localises to the cytoplasm. In terms of biological role, site-specific tyrosine recombinase, which acts by catalyzing the cutting and rejoining of the recombining DNA molecules. The XerC-XerD complex is essential to convert dimers of the bacterial chromosome into monomers to permit their segregation at cell division. It also contributes to the segregational stability of plasmids. This Listeria innocua serovar 6a (strain ATCC BAA-680 / CLIP 11262) protein is Tyrosine recombinase XerC.